Reading from the N-terminus, the 414-residue chain is Esterase FrsA (414 aa).

The protein belongs to the FrsA family.

The enzyme catalyses a carboxylic ester + H2O = an alcohol + a carboxylate + H(+). In terms of biological role, catalyzes the hydrolysis of esters. In Salmonella typhi, this protein is Esterase FrsA.